The primary structure comprises 294 residues: Glycine--tRNA ligase alpha subunit (294 aa).

Belongs to the class-II aminoacyl-tRNA synthetase family. As to quaternary structure, tetramer of two alpha and two beta subunits.

Its subcellular location is the cytoplasm. The enzyme catalyses tRNA(Gly) + glycine + ATP = glycyl-tRNA(Gly) + AMP + diphosphate. The sequence is that of Glycine--tRNA ligase alpha subunit from Sulfurovum sp. (strain NBC37-1).